Here is a 30-residue protein sequence, read N- to C-terminus: Urease subunit alpha (30 aa).

It belongs to the metallo-dependent hydrolases superfamily. Urease alpha subunit family. Heterotrimer of UreA (gamma), UreB (beta) and UreC (alpha) subunits. Three heterotrimers associate to form the active enzyme. The cofactor is Ni cation.

It is found in the cytoplasm. It carries out the reaction urea + 2 H2O + H(+) = hydrogencarbonate + 2 NH4(+). Its pathway is nitrogen metabolism; urea degradation; CO(2) and NH(3) from urea (urease route): step 1/1. The chain is Urease subunit alpha (ureC) from Escherichia coli.